A 739-amino-acid polypeptide reads, in one-letter code: Phosphoribosylformylglycinamidine synthase subunit PurL (739 aa).

His-55 is an active-site residue. ATP contacts are provided by Tyr-58 and Lys-97. Glu-99 lines the Mg(2+) pocket. Substrate-binding positions include 100-103 (SHNH) and Arg-122. The Proton acceptor role is filled by His-101. Asp-123 serves as a coordination point for Mg(2+). Gln-246 contacts substrate. Asp-276 contributes to the Mg(2+) binding site. 320–322 (ESQ) contributes to the substrate binding site. The ATP site is built by Asp-502 and Gly-539. Mg(2+) is bound at residue Asn-540. Ser-542 contributes to the substrate binding site.

Belongs to the FGAMS family. In terms of assembly, monomer. Part of the FGAM synthase complex composed of 1 PurL, 1 PurQ and 2 PurS subunits.

The protein resides in the cytoplasm. The enzyme catalyses N(2)-formyl-N(1)-(5-phospho-beta-D-ribosyl)glycinamide + L-glutamine + ATP + H2O = 2-formamido-N(1)-(5-O-phospho-beta-D-ribosyl)acetamidine + L-glutamate + ADP + phosphate + H(+). It participates in purine metabolism; IMP biosynthesis via de novo pathway; 5-amino-1-(5-phospho-D-ribosyl)imidazole from N(2)-formyl-N(1)-(5-phospho-D-ribosyl)glycinamide: step 1/2. Functionally, part of the phosphoribosylformylglycinamidine synthase complex involved in the purines biosynthetic pathway. Catalyzes the ATP-dependent conversion of formylglycinamide ribonucleotide (FGAR) and glutamine to yield formylglycinamidine ribonucleotide (FGAM) and glutamate. The FGAM synthase complex is composed of three subunits. PurQ produces an ammonia molecule by converting glutamine to glutamate. PurL transfers the ammonia molecule to FGAR to form FGAM in an ATP-dependent manner. PurS interacts with PurQ and PurL and is thought to assist in the transfer of the ammonia molecule from PurQ to PurL. This chain is Phosphoribosylformylglycinamidine synthase subunit PurL, found in Lactiplantibacillus plantarum (strain ATCC BAA-793 / NCIMB 8826 / WCFS1) (Lactobacillus plantarum).